We begin with the raw amino-acid sequence, 1649 residues long: eIF-2-alpha kinase GCN2 (1649 aa).

The interval 1-26 is disordered; it reads MAGGRGAAGRGPAEPQESYSQRQDHE. Positions 25 to 137 constitute an RWD domain; that stretch reads HELQALEAIY…HHVQSFLSEH (113 aa). A coiled-coil region spans residues 146–205; it reads HEEMLERQAQEKQQRLLEARQKEEQEQREILHEIQKRKEEIKEEKKRKEMAKQERLEITS. The disordered stretch occupies residues 227 to 260; the sequence is HGGSPDFVGNGKARAHSSGRSRRERQYSVCSGEA. At serine 230 the chain carries Phosphoserine. Over residues 239-249 the composition is skewed to basic residues; that stretch reads ARAHSSGRSRR. Protein kinase domains follow at residues 296-539 and 590-1001; these read VYNA…HSFI and FEEL…SELL. ATP contacts are provided by residues 596-604 and lysine 619; that span reads LGKGAFGAV. The interval 662–785 is disordered; that stretch reads PAVPGTPPPD…CNEKDSRHEI (124 aa). Threonine 667 carries the phosphothreonine modification. Positions 705 to 721 are enriched in polar residues; it reads LSSSVEWSTSAERSNSA. Composition is skewed to acidic residues over residues 731–740 and 754–764; these read SSDEEDEDER and SDSDIIFDNED. Residue aspartate 847 is the Proton acceptor of the active site. Threonine 870 carries the post-translational modification Phosphothreonine. Phosphothreonine; by autocatalysis occurs at positions 899 and 904. The interval 1022–1493 is histidyl-tRNA synthetase-like; that stretch reads TDGKAYRTMM…DHVMQKLRTK (472 aa). N6-acetyllysine is present on lysine 1259.

It belongs to the protein kinase superfamily. Ser/Thr protein kinase family. GCN2 subfamily. As to quaternary structure, homodimer; homodimerization is important for kinase activation by uncharged tRNAs. Interacts with GCN1; this interaction stimulates EIF2AK4/GCN2 kinase activity and is impaired by IMPACT upon a variety of stress conditions, such as amino acid depletion, UV-C irradiation, proteasome inhibitor treatment and glucose deprivation. Interacts with DNAJC3; this interaction inhibits EIF2AK4/GCN2 kinase activity during endoplasmic reticulum (ER), hypothermic and amino acid-starving stress conditions. Interacts with MAP3K20; activates EIF2AK4/GCN2 kinase activity in response to moderate ribotoxic stress. Autophosphorylated; autophosphorylation on Thr-899 is increased upon amino acid starvation and in UV irradiation cells and inhibited in presence of IMPACT.

It is found in the cytoplasm. The catalysed reaction is L-seryl-[protein] + ATP = O-phospho-L-seryl-[protein] + ADP + H(+). It carries out the reaction L-threonyl-[protein] + ATP = O-phospho-L-threonyl-[protein] + ADP + H(+). Metabolic-stress sensing protein kinase that phosphorylates the alpha subunit of eukaryotic translation initiation factor 2 (EIF2S1/eIF-2-alpha) in response to low amino acid availability. Plays a role as an activator of the integrated stress response (ISR) required for adaptation to amino acid starvation. EIF2S1/eIF-2-alpha phosphorylation in response to stress converts EIF2S1/eIF-2-alpha into a global protein synthesis inhibitor, leading to a global attenuation of cap-dependent translation, and thus to a reduced overall utilization of amino acids, while concomitantly initiating the preferential translation of ISR-specific mRNAs, such as the transcriptional activator ATF4, and hence allowing ATF4-mediated reprogramming of amino acid biosynthetic gene expression to alleviate nutrient depletion. Required for the translational induction of protein kinase PRKCH following amino acid starvation. Binds uncharged tRNAs. Involved in cell cycle arrest by promoting cyclin D1 mRNA translation repression after the unfolded protein response pathway (UPR) activation or cell cycle inhibitor CDKN1A/p21 mRNA translation activation in response to amino acid deprivation. Plays a role in the consolidation of synaptic plasticity, learning as well as formation of long-term memory. Plays a role in neurite outgrowth inhibition. Plays a role in feeding behavior to maintain amino acid homeostasis; contributes to the innate aversion toward diets of imbalanced amino acid composition. Plays a proapoptotic role in response to glucose deprivation. Promotes global cellular protein synthesis repression in response to UV irradiation independently of the stress-activated protein kinase/c-Jun N-terminal kinase (SAPK/JNK) and p38 MAPK signaling pathways. Plays a role in the antiviral response against alphavirus infection; impairs early viral mRNA translation of the incoming genomic virus RNA, thus preventing alphavirus replication. This is eIF-2-alpha kinase GCN2 from Rattus norvegicus (Rat).